The primary structure comprises 167 residues: Telethonin (167 aa).

S39 carries the phosphoserine modification. The interval 144 to 167 (VPVSKPGALRRSLSRSMSQEAQRG) is disordered. Residues 157–167 (SRSMSQEAQRG) show a composition bias toward polar residues.

Interacts with MYOZ1, MYOZ2 and MYOZ3. Interacts with CSRP3. Interacts directly with the N-terminal Ig-like domains of 2 titin (TTN) molecules. Interacts with ANKRD2; the interaction is direct. Heart and skeletal muscle.

Its subcellular location is the cytoplasm. The protein localises to the myofibril. It is found in the sarcomere. Functionally, muscle assembly regulating factor. Mediates the antiparallel assembly of titin (TTN) molecules at the sarcomeric Z-disk. The chain is Telethonin (TCAP) from Homo sapiens (Human).